Consider the following 2716-residue polypeptide: MNEKIKSPQTQQQQQGGAPAPAATPPSAGAAPGAATPPTSGPPTPNNNSNNGSDPSIQQQQQNVAPHPYGAPPPPGSGPGGPPGPDPAAVMHYHHLHQQQQQHPPPPHMQQQQHHGGPAPPPPGGAPEHAPGVKEEYTHLPPPHPHPAYGRYHADPNMDPYRYGQPLPGGKPPQQQQPHPQQQPPQQPGPGGSPNRPPQQRYIPGQPPQGPTPTLNSLLQSSNPPPPPQHRYANTYDPQQAAASAAAAAAAQQQQAGGPPPPGHGPPPPQHQPSPYGGQQGGWAPPPRPYSPQLGPSQQYRTPPPTNTSRGQSPYPPAHGQNSGSYPSSPQQQQQQQQQQQQQAGQQPGGPVPGGPPPGTGQQPPQQNTPPTSQYSPYPQRYPTPPGLPAGGSNHRTAYSTHQYPEPNRPWPGGSSPSPGSGHPLPPASPHHVPPLQQQPPPPPHVSAGGPPPSSSPGHAPSPSPQPSQASPSPHQELIGQNSNDSSSGGAHSGMGSGPPGTPNPQQVMRPTPSPTGSSGSRSMSPAVAQNHPISRPASNQSSSGGPMQQPPVGAGGPPPMPPHPGMPGGPPQQQQSQQQQASNSASSASNSPQQTPPPAPPPNQGMNNMATPPPPPQGAAGGGYPMPPHMHGGYKMGGPGQSPGAQGYPPQQPQQYPPGNYPPRPQYPPGAYATGPPPPPTSQAGAGGANSMPSGAQAGGYPGRGMPNHTGQYPPYQWVPPSPQQTVPGGAPGGAMVGNHVQGKGTPPPPVVGGPPPPQGSGSPRPLNYLKQHLQHKGGYGGSPTPPQGPQGYGNGPTGMHPGMPMGPPHHMGPPHGPTNMGPPTSTPPQSQMLQGGQPQGQGASGGPESGGPEHISQDNGISSSGPTGAAGMHAVTSVVTTGPDGTSMDEVSQQSTLSNASAASGEDPQCTTPKSRKNDPYSQSHLAPPSTSPHPVVMHPGGGPGEEYDMSSPPNWPRPAGSPQVFNHVPVPQEPFRSTITTTKKSDSLCKLYEMDDNPDRRGWLDKLRAFMEERRTPITACPTISKQPLDLYRLYIYVKERGGFVEVTKSKTWKDIAGLLGIGASSSAAYTLRKHYTKNLLTFECHFDRGDIDPLPIIQQVEAGSKKKTAKAASVPSPGGGHLDAGTTNSTGSSNSQDSFPAPPGSAPNAAIDGYPGYPGGSPYPVASGPQPDYATAGQMQRPPSQNNPQTPHPGAAAAVAAGDNISVSNPFEDPIAAGGGPGSGTGPGPGQGPGPGAASGGAGAVGAVGGGPQPHPPPPHSPHTAAQQAAGQHQQQHPQHQHPGLPGPPPPQQQQGQQGQQPPPSVGGGPPPAPQQHGPGQVPPSPQQHVRPAAGAPYPPGGSGYPTPVSRTPGSPYPSQPGAYGQYGSSDQYNATGPPGQPFGQGPGQYPPQNRNMYPPYGPEGEAPPTGANQYGPYGSRPYSQPPPGGPQPPTQTVAGGPPAGGAPGAPPSSAYPTGRPSQQDYYQPPPDQSPQPRRHPDFIKDSQPYPGYNARPQIYGAWQSGTQQYRPQYPSSPAPQNWGGAPPRGAAPPPGAPHGPPIQQPAGVAQWDQHRYPPQQGPPPPPQQQQQPQQQQQQPPYQQVAGPPGQQPPQAPPQWAQMNPGQTAQSGIAPPGSPLRPPSGPGQQNRMPGMPAQQQQSQQQGGVPQPPPQQASHGGVPSPGLPQVGPGGMVKPPYAMPPPPSQGVGQQVGQGPPGGMMSQKPPPMPGQAMQQQPLQQQPPSHQHPHPHQHPQHQHPHQMPPNQTAPGGYGPPGMPGGGAQLVKKELIFPHDSVESTTPVLYRRKRLMKADVCPVDPWRIFMAMRSGLLTECTWALDVLNVLLFDDSTVQFFGISNLPGLLTLLLEHFQKNLAEMFDERENEEQSALLAEDADDDADSGTVMCEKLRTSGRQPRCVRSISSYNRRRHYENMDRSGKDGAGNGSDSEDADEGIDLGQVRVQPNPEERSLLLSFTPNYTMVTRKGVPVRIQPAENDIFVDERQKAWDIDTNRLYEQLEPVGSDAWTYGFTEPDPLDGIIDVFKSEIVNIPFARYIRSDKKGRKRTELASSSRKPEIKTEENSTEEQTFNKKRRLVSGGSSSSGAHAEGKKSKLTSEEFAQPNAEVKKEPGTADSDCRPVDMDIEAPQQRLTNGVAPCSSTPAIFDPRTTAKDEARVLQRRRDSSFEDECYTRDEASLHLVSESQDSLARRCIALSNIFRNLTFVPGNETVLAKSTRFLAVLGRLLLLNHEHLRRTPKTRNYDREEDTDFSDSCSSLQGEREWWWDYLITIRENMLVAMANIAGHLELSRYDELIARPLIDGLLHWAVCPSAHGQDPFPSCGPNSVLSPQRLALEALCKLCVTDANVDLVIATPPFSRLEKLCAVLTRHLCRNEDQVLREFSVNLLHYLAAADSAMARTVALQSPCISYLVAFIEQAEQTALGVANQHGINYLRENPDSMGTSLDMLRRAAGTLLHLAKHPDNRSLFMQQEQRLLGLVMSHILDQQVALIISRVLYQVSRGTGPIHSVEFRLLQQRQQQQLRPGPAGKQAASAGGSATVKAETASTETSSTEAKPAPAATTAVVNDENSNSSQQLPPAATFNDVSNSSTNSNSCGTASSNQTNNSTTNSSHSSSAISSQSAITVAAPSAAATGAGSATAAAIASDQQQVSKVAAAAAAAAALSNASAAAAAAAAAAAASVGPPTSSSVSAGAAVAQPAAPPPTNAGTTTAVA.

The segment at 1–969 (MNEKIKSPQT…RPAGSPQVFN (969 aa)) is disordered. The span at 7 to 38 (SPQTQQQQQGGAPAPAATPPSAGAAPGAATPP) shows a compositional bias: low complexity. A compositionally biased stretch (polar residues) spans 54 to 64 (DPSIQQQQQNV). Positions 69-86 (YGAPPPPGSGPGGPPGPD) are enriched in pro residues. Composition is skewed to low complexity over residues 164–180 (GQPL…QPHP), 212–222 (TPTLNSLLQSS), and 238–257 (PQQA…QQAG). A compositionally biased stretch (pro residues) spans 258–272 (GPPPPGHGPPPPQHQ). Over residues 294–312 (LGPSQQYRTPPPTNTSRGQ) the composition is skewed to polar residues. The segment covering 320–346 (GQNSGSYPSSPQQQQQQQQQQQQQAGQ) has biased composition (low complexity). Residues 350-359 (GPVPGGPPPG) show a composition bias toward pro residues. Residues 360-377 (TGQQPPQQNTPPTSQYSP) are compositionally biased toward low complexity. The residue at position 384 (Thr-384) is a Phosphothreonine. Over residues 394-403 (NHRTAYSTHQ) the composition is skewed to polar residues. The span at 411 to 423 (WPGGSSPSPGSGH) shows a compositional bias: low complexity. The span at 424–466 (PLPPASPHHVPPLQQQPPPPPHVSAGGPPPSSSPGHAPSPSPQ) shows a compositional bias: pro residues. Low complexity-rich tracts occupy residues 467–476 (PSQASPSPHQ) and 509–526 (MRPT…SMSP). Residues 557–571 (GPPPMPPHPGMPGGP) show a composition bias toward pro residues. A compositionally biased stretch (low complexity) spans 572-594 (PQQQQSQQQQASNSASSASNSPQ). Pro residues-rich tracts occupy residues 595–604 (QTPPPAPPPN), 651–669 (PQQP…PQYP), 747–760 (TPPP…PPPQ), and 806–818 (PMGP…PPHG). A Phosphothreonine modification is found at Thr-747. Over residues 819-838 (PTNMGPPTSTPPQSQMLQGG) the composition is skewed to low complexity. A compositionally biased stretch (gly residues) spans 839–851 (QPQGQGASGGPES). Polar residues-rich tracts occupy residues 859–868 (QDNGISSSGP) and 879–904 (SVVT…NASA). In terms of domain architecture, ARID spans 1000–1091 (NPDRRGWLDK…NLLTFECHFD (92 aa)). Disordered regions lie at residues 1108–1766 (SKKK…PGGG), 1914–1936 (HYEN…EDAD), and 2045–2123 (KGRK…DCRP). 2 stretches are compositionally biased toward low complexity: residues 1129–1139 (GTTNSTGSSNS) and 1164–1173 (GSPYPVASGP). A compositionally biased stretch (polar residues) spans 1181–1193 (GQMQRPPSQNNPQ). Over residues 1221 to 1256 (AGGGPGSGTGPGPGQGPGPGAASGGAGAVGAVGGGP) the composition is skewed to gly residues. Positions 1266–1288 (PHTAAQQAAGQHQQQHPQHQHPG) are enriched in low complexity. Residues 1305-1318 (QPPPSVGGGPPPAP) show a composition bias toward pro residues. Low complexity predominate over residues 1407-1427 (PEGEAPPTGANQYGPYGSRPY). A compositionally biased stretch (pro residues) spans 1428 to 1438 (SQPPPGGPQPP). Residues 1456 to 1471 (PSSAYPTGRPSQQDYY) are compositionally biased toward low complexity. Residues 1508 to 1524 (QSGTQQYRPQYPSSPAP) show a composition bias toward polar residues. A compositionally biased stretch (pro residues) spans 1534 to 1548 (GAAPPPGAPHGPPIQ). The segment covering 1573–1593 (QQQQPQQQQQQPPYQQVAGPP) has biased composition (low complexity). Residues 1620 to 1629 (PGSPLRPPSG) are compositionally biased toward pro residues. 2 stretches are compositionally biased toward low complexity: residues 1636–1652 (MPGM…QGGV) and 1715–1729 (GQAM…QPPS). The segment covering 1731 to 1744 (QHPHPHQHPQHQHP) has biased composition (basic residues). The span at 1755 to 1766 (GGYGPPGMPGGG) shows a compositional bias: gly residues. An EHD domain is found at 1769-2517 (LVKKELIFPH…PIHSVEFRLL (749 aa)). Phosphoserine occurs at positions 1930, 1932, and 2081. 2 stretches are compositionally biased toward basic and acidic residues: residues 2091–2100 (AEGKKSKLTS) and 2109–2123 (EVKK…DCRP). Phosphoserine is present on residues Ser-2168 and Ser-2169. Thr-2176 is modified (phosphothreonine). The residue at position 2181 (Ser-2181) is a Phosphoserine. Over residues 2520-2566 (RQQQQLRPGPAGKQAASAGGSATVKAETASTETSSTEAKPAPAATTA) the composition is skewed to low complexity. 2 disordered regions span residues 2520–2617 (RQQQ…SHSS) and 2684–2716 (VGPP…TAVA). Over residues 2570–2579 (DENSNSSQQL) the composition is skewed to polar residues. 2 stretches are compositionally biased toward low complexity: residues 2584–2617 (TFND…SHSS) and 2684–2701 (VGPP…VAQP).

In terms of assembly, component of the Brahma complex, which is composed of Brm, Osa, Mor, Snr1/Bap45, Bap111/Dalao, Bap55, Bap60 and Bap47. Interacts with Pnr and Chi via its EHD domain. In terms of tissue distribution, ubiquitously expressed in early embryo. In third instar larvae, it is ubiquitously expressed in wing and eye-antenna imaginal disks, with a stronger expression in a band just anterior to the morphogenetic furrow.

The protein resides in the nucleus. In terms of biological role, trithorax group (trxG) protein required for embryonic segmentation, development of the notum and wing margin, and photoreceptor differentiation. Required for the activation of genes such as Antp, Ubx and Eve. Binds to DNA without specific affinity, suggesting that it is recruited to promoters by promoter-specific proteins. Essential component of the Brahma complex, a multiprotein complex which is the equivalent of the yeast SWI/SNF complex and acts by remodeling the chromatin by catalyzing an ATP-dependent alteration in the structure of nucleosomal DNA. This complex can both serve as a transcriptional coactivator or corepressor, depending on the context. Acts as an essential coactivator for Zeste, which recruits the whole complex to specific genes. In contrast, it acts as a corepressor for Wg target genes, possibly via an interaction with Pan and Gro. It also acts as a negative regulator for proneural achaete-scute, when it is directly recruited by Pan and Chi. Also represses E2f activation. This Drosophila melanogaster (Fruit fly) protein is Trithorax group protein osa (osa).